A 618-amino-acid chain; its full sequence is UvrABC system protein C (618 aa).

The region spanning 13 to 92 is the GIY-YIG domain; the sequence is DKPGVYLMKN…IKKYRPKYNI (80 aa). Residues 204-239 form the UVR domain; that stretch reads LDIVENFKLNMEKAAENLEFEKAAMLRDKINIIEKI.

Belongs to the UvrC family. In terms of assembly, interacts with UvrB in an incision complex.

Its subcellular location is the cytoplasm. Functionally, the UvrABC repair system catalyzes the recognition and processing of DNA lesions. UvrC both incises the 5' and 3' sides of the lesion. The N-terminal half is responsible for the 3' incision and the C-terminal half is responsible for the 5' incision. This chain is UvrABC system protein C, found in Clostridium botulinum (strain Loch Maree / Type A3).